Here is a 235-residue protein sequence, read N- to C-terminus: MDIKLKDFEGPLDLLLHLVSKYEVDIYDVPIVDIIEQYLAYIATLQAMKLEVAGEYMVMASQLMLIKSRKLLPKVVETIEAEEDPELQLLHQIEEYRTYKLLGEELALKHNERAQRFSKPKLELIYDDITLKQDKTVLDVFLAFSKVMAEKQEEIKNSHTTIKSDDYRIEDIMTVVEEQVIRQKETNLSWFFKRAGSLNEIITIFLAALELIKVHRVYVKQEHNFDDIILRKESA.

This sequence belongs to the ScpA family. In terms of assembly, component of a cohesin-like complex composed of ScpA, ScpB and the Smc homodimer, in which ScpA and ScpB bind to the head domain of Smc. The presence of the three proteins is required for the association of the complex with DNA.

It localises to the cytoplasm. Participates in chromosomal partition during cell division. May act via the formation of a condensin-like complex containing Smc and ScpB that pull DNA away from mid-cell into both cell halves. The chain is Segregation and condensation protein A from Streptococcus mutans serotype c (strain ATCC 700610 / UA159).